A 398-amino-acid polypeptide reads, in one-letter code: Chalcone synthase (398 aa).

The active site involves Cys167.

This sequence belongs to the thiolase-like superfamily. Chalcone/stilbene synthases family.

The catalysed reaction is (E)-4-coumaroyl-CoA + 3 malonyl-CoA + 3 H(+) = 2',4,4',6'-tetrahydroxychalcone + 3 CO2 + 4 CoA. The protein operates within secondary metabolite biosynthesis; flavonoid biosynthesis. Its function is as follows. The primary product of this enzyme is 4,2',4',6'-tetrahydroxychalcone (also termed naringenin-chalcone or chalcone) which can under specific conditions spontaneously isomerize into naringenin. The polypeptide is Chalcone synthase (CHS) (Callistephus chinensis (China aster)).